A 61-amino-acid chain; its full sequence is ERMES regulator 1 (61 aa).

Residues 1–20 (MLPNLRRIFASFRTEEEERS) are Mitochondrial intermembrane-facing. The helical transmembrane segment at 21-43 (YSRKAFFHLIGYITCSVLFSWLV) threads the bilayer. Over 44–61 (RKKVISSPVVSSPIHALS) the chain is Cytoplasmic.

Belongs to the EMR1 family. As to quaternary structure, interacts with the ER-mitochondria encounter structure (ERMES) complex. Interacts with mdm12. Interacts with mdm34.

The protein resides in the mitochondrion outer membrane. In terms of biological role, mediates the formation of endoplasmic reticulum (ER)-mitochondria encounter structure (ERMES) foci, thereby contributing to the formation of ER-mitochondrial contact sites. In Schizosaccharomyces pombe (strain 972 / ATCC 24843) (Fission yeast), this protein is ERMES regulator 1.